The following is a 603-amino-acid chain: Elongation factor 4 (603 aa).

A tr-type G domain is found at 5-187 (RHIRNFCIIA…AVVNFVPPPK (183 aa)). GTP is bound by residues 17-22 (DHGKST) and 134-137 (NKID).

The protein belongs to the TRAFAC class translation factor GTPase superfamily. Classic translation factor GTPase family. LepA subfamily.

It localises to the cell membrane. The enzyme catalyses GTP + H2O = GDP + phosphate + H(+). Functionally, required for accurate and efficient protein synthesis under certain stress conditions. May act as a fidelity factor of the translation reaction, by catalyzing a one-codon backward translocation of tRNAs on improperly translocated ribosomes. Back-translocation proceeds from a post-translocation (POST) complex to a pre-translocation (PRE) complex, thus giving elongation factor G a second chance to translocate the tRNAs correctly. Binds to ribosomes in a GTP-dependent manner. The sequence is that of Elongation factor 4 from Symbiobacterium thermophilum (strain DSM 24528 / JCM 14929 / IAM 14863 / T).